The following is a 1057-amino-acid chain: MLCWGNASFGQLGLGGIDEEIVLEPRKSDFFINKRVRDVGCGLRHTVFVLDDGTVYTCGCNDLGQLGHEKSRKKPEQVVALDAQNIVAVSCGEAHTLALNDKGQVYAWGLDSDGQLGLVGSEECIRVPRNIKSLSDIQIVQVACGYYHSLALSKASEVFCWGQNKYGQLGLGTDCKKQTSPQLLKSLLGIPFMQVAAGGAHSFVLTLSGAIFGWGRNKFGQLGLNDENDRYVPNLLKSLRSQKIVYICCGEDHTAALTKEGGVFTFGAGGYGQLGHNSTSHEINPRKVFELMGSIVTEIACGRQHTSAFVPSSGRIYSFGLGGNGQLGTGSTSNRKSPFTVKGNWYPYNGQCLPDIDSEEYFCVKRIFSGGDQSFSHYSSPQNCGPPDDFRCPNPTKQIWTVNEALIQKWLSYPSGRFPVEIANEIDGTFSSSGCLNGSFLAVSNDDHYRTGTRFSGVDMNAARLLFHKLIQPDHPQISQQVAASLEKNLIPKLTSSLPDVEALRFYLTLPECPLMSDSNNFTTIAIPFGTALVNLEKAPLKVLENWWSVLEPPLFLKIVELFKEVVVHLLKLYKIGIPPSERRIFNSFLHTALKVLEILHRVNEKMGQIIQYDKFYIHEVQELIDIRNDYINWVQQQAYGMDVNHGLTELADIPVTICTYPFVFDAQAKTTLLQTDAVLQMQMAIDQAHRQNVSSLFLPVIESVNPCLILVVRRENIVGDAMEVLRKTKNIDYKKPLKVIFVGEDAVDAGGVRKEFFLLIMRELLDPKYGMFRYYEDSRLIWFSDKTFEDSDLFHLIGVICGLAIYNCTIVDLHFPLALYKKLLKKKPSLDDLKELMPDVGRSMQQLLDYPEDDIEETFCLNFTITVENFGATEVKELVLNGADTAVNKQNRQEFVDAYVDYIFNKSVASLFDAFHAGFHKVCGGKVLLLFQPNELQAMVIGNTNYDWKELEKNTEYKGEYWAEHPTIKIFWEVFHELPLEKKKQFLLFLTGSDRIPILGMKSLKLVIQSTGGGEEYLPVSHTCFNLLDLPKYTEKETLRSKLIQAIDHNEGFSLI.

RCC1 repeat units follow at residues 1–51, 52–101, 102–154, 156–207, 208–259, 261–311, and 313–368; these read MLCW…FVLD, DGTV…ALND, KGQV…ALSK, SEVF…VLTL, SGAI…ALTK, GGVF…AFVP, and SGRI…KRIF. An HECT domain is found at 730–1057; the sequence is KNIDYKKPLK…IDHNEGFSLI (328 aa). Catalysis depends on cysteine 1025, which acts as the Glycyl thioester intermediate.

In terms of tissue distribution, expressed in brain and testis and detected in heart and placenta.

The protein localises to the cytoplasm. The protein resides in the cytosol. The catalysed reaction is S-ubiquitinyl-[E2 ubiquitin-conjugating enzyme]-L-cysteine + [acceptor protein]-L-lysine = [E2 ubiquitin-conjugating enzyme]-L-cysteine + N(6)-ubiquitinyl-[acceptor protein]-L-lysine.. Its pathway is protein modification; protein ubiquitination. Probable E3 ubiquitin-protein ligase involved in either protein trafficking or in the distribution of cellular structures. Required for spermatozoon maturation and fertility, and for the removal of the cytoplasmic droplet of the spermatozoon. E3 ubiquitin-protein ligases accept ubiquitin from an E2 ubiquitin-conjugating enzyme in the form of a thioester and then directly transfer it to targeted substrates. The protein is Probable E3 ubiquitin-protein ligase HERC4 (HERC4) of Homo sapiens (Human).